The primary structure comprises 359 residues: MSLQRLLQHSSNGNLADFCAGPAYSSYSTLTGSLTMDDNRRIQMLADTVATLPRGRKQLALTRSSSLSDFSWSQRKLVTVEKQDNETFGFEIQSYRPQNQNACSSEMFTLICKIQEDSPAHCAGLQAGDVLANINGVSTEGFTYKQVVDLIRSSGNLLTIETLNGTMILKRTELEAKLQVLKQTLKQKWVEYRSLQLQEHRLLHGDAANCPSLENMDLDELSLFGPLPGPGPALVDRNRLSSESSCKSWLSSMTMDSEDGYQTCVSEDSSRGAFSRQTSTDDECFIPKEGDDFLRRSSSRRNRSISNTSSGSMSPLWEGNLSSMFGTLPRKSRKGSVRKQLLKFIPGLHRAVEEEESRF.

In terms of domain architecture, PDZ spans 77-166; sequence LVTVEKQDNE…LLTIETLNGT (90 aa). Positions 166-188 are interaction with CYTH1; sequence TMILKRTELEAKLQVLKQTLKQK. Positions 166 to 188 form a coiled coil; sequence TMILKRTELEAKLQVLKQTLKQK.

Interacts with CYTH1 and SNX27. As to expression, expressed in lymph nodes, thymus, spleen, lung, peripheral blood leukocytes and bone marrow.

It is found in the cytoplasm. It localises to the early endosome. By its binding to cytohesin-1 (CYTH1), it modifies activation of ARFs by CYTH1 and its precise function may be to sequester CYTH1 in the cytoplasm. The sequence is that of Cytohesin-interacting protein (CYTIP) from Homo sapiens (Human).